Consider the following 78-residue polypeptide: Small ribosomal subunit protein bS16c (78 aa).

It belongs to the bacterial ribosomal protein bS16 family.

The protein localises to the plastid. Its subcellular location is the chloroplast. The protein is Small ribosomal subunit protein bS16c of Adiantum capillus-veneris (Maidenhair fern).